Reading from the N-terminus, the 276-residue chain is Putative non-heme chloroperoxidase (276 aa).

One can recognise an AB hydrolase-1 domain in the interval 26 to 263 (PIVLIHGFPL…GGPHAINWTH (238 aa)). Catalysis depends on residues Ser99, Asp228, and His257.

Belongs to the AB hydrolase superfamily. Bacterial non-heme haloperoxidase / perhydrolase family.

The protein is Putative non-heme chloroperoxidase of Synechocystis sp. (strain ATCC 27184 / PCC 6803 / Kazusa).